Here is a 277-residue protein sequence, read N- to C-terminus: Uridine-cytidine kinase 1 (277 aa).

Positions 1–30 are disordered; the sequence is MASAGGGGSESAAPEADRPQPRPFLIGVSG. 30–38 serves as a coordination point for ATP; the sequence is GGTASGKST. Residues Asp-87, Tyr-115, His-120, Arg-169, Arg-178, and Gln-186 each contribute to the substrate site. ATP is bound at residue Asp-215. Over residues 238 to 250 the composition is skewed to basic residues; that stretch reads RHRGGPNGRNHKR. The tract at residues 238–277 is disordered; it reads RHRGGPNGRNHKRTFPEPGDHPGVLATGKRSHLESSSRPH. Thr-251 carries the phosphothreonine modification. A compositionally biased stretch (basic and acidic residues) spans 268-277; it reads SHLESSSRPH.

Belongs to the uridine kinase family.

The enzyme catalyses uridine + ATP = UMP + ADP + H(+). It catalyses the reaction cytidine + ATP = CMP + ADP + H(+). Its pathway is pyrimidine metabolism; CTP biosynthesis via salvage pathway; CTP from cytidine: step 1/3. It functions in the pathway pyrimidine metabolism; UMP biosynthesis via salvage pathway; UMP from uridine: step 1/1. In terms of biological role, phosphorylates uridine and cytidine to uridine monophosphate and cytidine monophosphate. Does not phosphorylate deoxyribonucleosides or purine ribonucleosides. Can use ATP or GTP as a phosphate donor. This chain is Uridine-cytidine kinase 1 (Uck1), found in Mus musculus (Mouse).